A 426-amino-acid chain; its full sequence is Trophoblast glycoprotein (426 aa).

The first 31 residues, 1-31, serve as a signal peptide directing secretion; the sequence is MPGAGSRGPSAGDGRLRLARLALVLLGWVSA. The Extracellular portion of the chain corresponds to 32-361; that stretch reads SAPSSSVPSS…AVLPQSLQTS (330 aa). Residues 33 to 47 are compositionally biased toward low complexity; that stretch reads APSSSVPSSSTSPAA. The tract at residues 33-53 is disordered; the sequence is APSSSVPSSSTSPAAFLASGS. One can recognise an LRRNT domain in the interval 53–91; the sequence is SAQPPPAERCPAACECSEAARTVKCVNRNLLEVPADLPP. Disulfide bonds link Cys62-Cys68 and Cys66-Cys77. LRR repeat units lie at residues 92–113, 116–139, 141–163, 172–210, 215–238, 239–261, and 262–281; these read YVRNLFLTGNQMTVLPAGAFAR, PLADLEALNLSGNHLKEVCAGAFE, LPGLRRLDLSHNPLTNLSAFAFA, PSPLEELILNHIVPPEDQRQNGSFEGMVAFEGMVAAALR, LRGLTRLELASNHFLFLPRDLLAQ, LPSLRYLDLRNNSLVSLTYASFR, and NLTHLESLHLEDNALKVLHN. N-linked (GlcNAc...) asparagine glycosylation is present at Asn124. Residue Asn281 is glycosylated (N-linked (GlcNAc...) asparagine). The region spanning 289-352 is the LRRCT domain; it reads GLAHVKVFLD…LNSSDLDCDA (64 aa). Intrachain disulfides connect Cys304-Cys329 and Cys306-Cys350. The chain crosses the membrane as a helical span at residues 362 to 382; that stretch reads YVFLGIVLALIGAIFLLVLYL. Residues 383–426 lie on the Cytoplasmic side of the membrane; it reads NRKGIKKWMHNIRDACRDHMEGYHYRYEINADPRLTNLSSNSDV. Ser424 is modified (phosphoserine).

Highly glycosylated. As to expression, highly expressed in embryo and placenta. In adult, expressed only in brain and ovary. Not detected in kidney small intestine, heart, spleen, testis, liver, lung, thymus and stomach.

Its subcellular location is the cell membrane. Its function is as follows. May function as an inhibitor of Wnt/beta-catenin signaling by indirectly interacting with LRP6 and blocking Wnt3a-dependent LRP6 internalization. This Mus musculus (Mouse) protein is Trophoblast glycoprotein (Tpbg).